A 173-amino-acid chain; its full sequence is Inorganic pyrophosphatase (173 aa).

Lys-28, Arg-42, and Tyr-54 together coordinate substrate. The Mg(2+) site is built by Asp-64, Asp-69, and Asp-101. Tyr-140 lines the substrate pocket.

This sequence belongs to the PPase family. Homohexamer. The cofactor is Mg(2+).

The protein resides in the cytoplasm. The catalysed reaction is diphosphate + H2O = 2 phosphate + H(+). Catalyzes the hydrolysis of inorganic pyrophosphate (PPi) forming two phosphate ions. The chain is Inorganic pyrophosphatase from Helicobacter pylori (strain J99 / ATCC 700824) (Campylobacter pylori J99).